Reading from the N-terminus, the 106-residue chain is Cytochrome c2 (106 aa).

Positions 19, 22, 23, and 84 each coordinate heme c.

Belongs to the cytochrome c family. Binds 1 heme c group covalently per subunit.

In Rhodopila globiformis (Rhodopseudomonas globiformis), this protein is Cytochrome c2.